The following is a 59-amino-acid chain: Embryonic testis differentiation protein homolog C (59 aa).

The tract at residues 1–22 is disordered; sequence MDKELPKASPSEPALNIKKSGK.

The sequence is that of Embryonic testis differentiation protein homolog C from Homo sapiens (Human).